Reading from the N-terminus, the 237-residue chain is Ribonuclease PH (237 aa).

Residues arginine 86 and 124 to 126 (GTR) each bind phosphate.

It belongs to the RNase PH family. As to quaternary structure, homohexameric ring arranged as a trimer of dimers.

The catalysed reaction is tRNA(n+1) + phosphate = tRNA(n) + a ribonucleoside 5'-diphosphate. In terms of biological role, phosphorolytic 3'-5' exoribonuclease that plays an important role in tRNA 3'-end maturation. Removes nucleotide residues following the 3'-CCA terminus of tRNAs; can also add nucleotides to the ends of RNA molecules by using nucleoside diphosphates as substrates, but this may not be physiologically important. Probably plays a role in initiation of 16S rRNA degradation (leading to ribosome degradation) during starvation. This is Ribonuclease PH from Shewanella baltica (strain OS223).